Here is a 299-residue protein sequence, read N- to C-terminus: Small ribosomal subunit protein uS2 (299 aa).

Low complexity predominate over residues 259 to 291 (AAASAAGPTSWEADGADWAASSAPAAAGESWAE). The disordered stretch occupies residues 259–299 (AAASAAGPTSWEADGADWAASSAPAAAGESWAETQPAEGKW).

Belongs to the universal ribosomal protein uS2 family. Component of the small ribosomal subunit. Mature ribosomes consist of a small (40S) and a large (60S) subunit. The 40S subunit contains about 33 different proteins and 1 molecule of RNA (18S). The 60S subunit contains about 49 different proteins and 3 molecules of RNA (25S, 5.8S and 5S). Interacts with rps21.

Its subcellular location is the cytoplasm. In terms of biological role, required for the assembly and/or stability of the 40S ribosomal subunit. Required for the processing of the 20S rRNA-precursor to mature 18S rRNA in a late step of the maturation of 40S ribosomal subunits. The chain is Small ribosomal subunit protein uS2 (rps0) from Aspergillus flavus (strain ATCC 200026 / FGSC A1120 / IAM 13836 / NRRL 3357 / JCM 12722 / SRRC 167).